The chain runs to 1372 residues: DNA-directed RNA polymerase subunit beta (1372 aa).

Belongs to the RNA polymerase beta chain family. The RNAP catalytic core consists of 2 alpha, 1 beta, 1 beta' and 1 omega subunit. When a sigma factor is associated with the core the holoenzyme is formed, which can initiate transcription.

It carries out the reaction RNA(n) + a ribonucleoside 5'-triphosphate = RNA(n+1) + diphosphate. DNA-dependent RNA polymerase catalyzes the transcription of DNA into RNA using the four ribonucleoside triphosphates as substrates. This chain is DNA-directed RNA polymerase subunit beta, found in Rickettsia bellii (strain RML369-C).